Reading from the N-terminus, the 236-residue chain is 2,3,4,5-tetrahydropyridine-2,6-dicarboxylate N-acetyltransferase (236 aa).

This sequence belongs to the transferase hexapeptide repeat family. DapH subfamily.

The catalysed reaction is (S)-2,3,4,5-tetrahydrodipicolinate + acetyl-CoA + H2O = L-2-acetamido-6-oxoheptanedioate + CoA. It participates in amino-acid biosynthesis; L-lysine biosynthesis via DAP pathway; LL-2,6-diaminopimelate from (S)-tetrahydrodipicolinate (acetylase route): step 1/3. Functionally, catalyzes the transfer of an acetyl group from acetyl-CoA to tetrahydrodipicolinate. The protein is 2,3,4,5-tetrahydropyridine-2,6-dicarboxylate N-acetyltransferase of Lactobacillus helveticus (strain DPC 4571).